Reading from the N-terminus, the 130-residue chain is L-ectoine synthase (130 aa).

This sequence belongs to the ectoine synthase family.

It catalyses the reaction (2S)-4-acetamido-2-aminobutanoate = L-ectoine + H2O. The protein operates within amine and polyamine biosynthesis; ectoine biosynthesis; L-ectoine from L-aspartate 4-semialdehyde: step 3/3. Catalyzes the circularization of gamma-N-acetyl-alpha,gamma-diaminobutyric acid (ADABA) to ectoine (1,4,5,6-tetrahydro-2-methyl-4-pyrimidine carboxylic acid), which is an excellent osmoprotectant. This Mycobacteroides abscessus (strain ATCC 19977 / DSM 44196 / CCUG 20993 / CIP 104536 / JCM 13569 / NCTC 13031 / TMC 1543 / L948) (Mycobacterium abscessus) protein is L-ectoine synthase.